Reading from the N-terminus, the 418-residue chain is 26S proteasome regulatory subunit 6B (418 aa).

An N-acetylmethionine modification is found at Met1. A Phosphoserine modification is found at Ser21. Thr25 carries the phosphothreonine modification. Ser28 carries the post-translational modification Phosphoserine. 206-213 provides a ligand contact to ATP; that stretch reads GPPGCGKT. 2 positions are modified to N6-acetyllysine: Lys397 and Lys401.

Belongs to the AAA ATPase family. In terms of assembly, component of the 19S proteasome regulatory particle complex. The 26S proteasome consists of a 20S core particle (CP) and two 19S regulatory subunits (RP). The regulatory particle is made of a lid composed of 9 subunits, a base containing 6 ATPases including PSMC4 and few additional components. Interacts with NR1I3. Interacts with PAAF1. Interacts with TRIM5. Interacts with ZFAND1.

It is found in the cytoplasm. The protein resides in the nucleus. Component of the 26S proteasome, a multiprotein complex involved in the ATP-dependent degradation of ubiquitinated proteins. This complex plays a key role in the maintenance of protein homeostasis by removing misfolded or damaged proteins, which could impair cellular functions, and by removing proteins whose functions are no longer required. Therefore, the proteasome participates in numerous cellular processes, including cell cycle progression, apoptosis, or DNA damage repair. PSMC4 belongs to the heterohexameric ring of AAA (ATPases associated with diverse cellular activities) proteins that unfolds ubiquitinated target proteins that are concurrently translocated into a proteolytic chamber and degraded into peptides. The protein is 26S proteasome regulatory subunit 6B (PSMC4) of Bos taurus (Bovine).